Here is a 20-residue protein sequence, read N- to C-terminus: Peptide encoded by miPEP171b (20 aa).

In terms of tissue distribution, lateral root initiations.

Its function is as follows. Regulatory peptide encoded by the primary transcript (pri-miR171b) of the microRNA miR171b that enhances the accumulation of its corresponding mature miRNA. Acts probably as a transcriptional activator of its corresponding pri-miRNA. Has no effect on the accumulation of other miRNAs. Addition of synthetic miPEP171b increases the abundance of miR171b, with consequent reduction of lateral root formation. This chain is Peptide encoded by miPEP171b, found in Medicago truncatula (Barrel medic).